Consider the following 570-residue polypeptide: Methionine--tRNA ligase (570 aa).

A 'HIGH' region motif is present at residues 11-21 (PYVQTVPHLGN). Zn(2+)-binding residues include C143, C146, C156, and C159. Positions 333–337 (KFSKS) match the 'KMSKS' region motif. ATP is bound at residue K336.

This sequence belongs to the class-I aminoacyl-tRNA synthetase family. MetG type 1 subfamily. Requires Zn(2+) as cofactor.

It localises to the cytoplasm. The catalysed reaction is tRNA(Met) + L-methionine + ATP = L-methionyl-tRNA(Met) + AMP + diphosphate. Its function is as follows. Is required not only for elongation of protein synthesis but also for the initiation of all mRNA translation through initiator tRNA(fMet) aminoacylation. The sequence is that of Methionine--tRNA ligase from Pyrobaculum calidifontis (strain DSM 21063 / JCM 11548 / VA1).